A 347-amino-acid polypeptide reads, in one-letter code: NADH-ubiquinone oxidoreductase chain 2 (347 aa).

The next 11 membrane-spanning stretches (helical) occupy residues 1 to 21 (MNPL…SIIL), 25 to 45 (HWFM…PVLM), 59 to 79 (YFLT…INLM), 96 to 116 (LLIT…FWVP), 122 to 142 (VSLQ…LAVM), 145 to 165 (IFAS…IMIG), 178 to 198 (IMAY…IYNP), 200 to 220 (LMLL…MMFM), 242 to 262 (VLMM…GFMP), 274 to 294 (NSVI…FFYM), and 325 to 345 (LLAP…MFIL).

Belongs to the complex I subunit 2 family. Core subunit of respiratory chain NADH dehydrogenase (Complex I) which is composed of 45 different subunits. Interacts with TMEM242.

The protein resides in the mitochondrion inner membrane. It carries out the reaction a ubiquinone + NADH + 5 H(+)(in) = a ubiquinol + NAD(+) + 4 H(+)(out). Its function is as follows. Core subunit of the mitochondrial membrane respiratory chain NADH dehydrogenase (Complex I) which catalyzes electron transfer from NADH through the respiratory chain, using ubiquinone as an electron acceptor. Essential for the catalytic activity and assembly of complex I. This Myosorex kihaulei (Kihaule's mouse shrew) protein is NADH-ubiquinone oxidoreductase chain 2.